The following is a 432-amino-acid chain: Adenylosuccinate synthetase (432 aa).

Residues 13–19 and 41–43 each bind GTP; these read GDEGKGK and GHT. Asp14 (proton acceptor) is an active-site residue. Positions 14 and 41 each coordinate Mg(2+). Residues 14 to 17, 39 to 42, Thr130, Arg144, Gln225, Thr240, and Arg304 contribute to the IMP site; these read DEGK and NAGH. His42 (proton donor) is an active-site residue. Residue 300–306 coordinates substrate; it reads AVTGRPR. GTP-binding positions include Arg306, 332–334, and 415–417; these read KLD and STG.

It belongs to the adenylosuccinate synthetase family. As to quaternary structure, homodimer. The cofactor is Mg(2+).

Its subcellular location is the cytoplasm. The enzyme catalyses IMP + L-aspartate + GTP = N(6)-(1,2-dicarboxyethyl)-AMP + GDP + phosphate + 2 H(+). It functions in the pathway purine metabolism; AMP biosynthesis via de novo pathway; AMP from IMP: step 1/2. In terms of biological role, plays an important role in the de novo pathway of purine nucleotide biosynthesis. Catalyzes the first committed step in the biosynthesis of AMP from IMP. The chain is Adenylosuccinate synthetase from Mannheimia succiniciproducens (strain KCTC 0769BP / MBEL55E).